The chain runs to 311 residues: Non-homologous end joining protein Ku (311 aa).

Residues 26-210 enclose the Ku domain; it reads ISFGLVNIPI…NVNDKELQTA (185 aa). The disordered stretch occupies residues 269–311; it reads ASIDRTRRPNRETPAAAPAQAAEPKGAGDKKQKTTRKKASGTS. The span at 282 to 293 shows a compositional bias: low complexity; sequence PAAAPAQAAEPK. A compositionally biased stretch (basic residues) spans 301–311; sequence KTTRKKASGTS.

The protein belongs to the prokaryotic Ku family. In terms of assembly, homodimer. Interacts with LigD.

The protein resides in the spore core. In terms of biological role, with LigD forms a non-homologous end joining (NHEJ) DNA repair enzyme, which repairs dsDNA breaks with reduced fidelity. Binds linear dsDNA with 5'- and 3'- overhangs but not closed circular dsDNA nor ssDNA. Recruits and stimulates the ligase activity of LigD. Probably involved in DNA repair during spore germination. The sequence is that of Non-homologous end joining protein Ku from Bacillus subtilis (strain 168).